The following is a 154-amino-acid chain: MGLSDGEWHLVLNVWGKVETDLAGHGQEVLIRLFKSHPETLEKFDKFKHLKSEDDMRRSEDLRKHGNTVLTALGGILKKKGHHEAELKPLAQSHATKHKIPIKYLEFISEAIIHVLHSKHPAEFGADAQAAMKKALELFRNDIAAKYKELGFHG.

In terms of domain architecture, Globin spans 2–148 (GLSDGEWHLV…FRNDIAAKYK (147 aa)). Serine 4 carries the phosphoserine modification. Histidine 65 contributes to the nitrite binding site. Histidine 65 is an O2 binding site. Phosphothreonine is present on threonine 68. A heme b-binding site is contributed by histidine 94.

The protein belongs to the globin family. As to quaternary structure, monomeric.

It is found in the cytoplasm. Its subcellular location is the sarcoplasm. The catalysed reaction is Fe(III)-heme b-[protein] + nitric oxide + H2O = Fe(II)-heme b-[protein] + nitrite + 2 H(+). It carries out the reaction H2O2 + AH2 = A + 2 H2O. Its function is as follows. Monomeric heme protein which primary function is to store oxygen and facilitate its diffusion within muscle tissues. Reversibly binds oxygen through a pentacoordinated heme iron and enables its timely and efficient release as needed during periods of heightened demand. Depending on the oxidative conditions of tissues and cells, and in addition to its ability to bind oxygen, it also has a nitrite reductase activity whereby it regulates the production of bioactive nitric oxide. Under stress conditions, like hypoxia and anoxia, it also protects cells against reactive oxygen species thanks to its pseudoperoxidase activity. This is Myoglobin (MB) from Halichoerus grypus (Gray seal).